Reading from the N-terminus, the 447-residue chain is N-succinylarginine dihydrolase (447 aa).

Residues 19–28 (AGLSFGNEAS), N110, and 137–138 (HR) contribute to the substrate site. Residue E174 is part of the active site. R212 contributes to the substrate binding site. Residue H248 is part of the active site. The substrate site is built by D250 and N359. C365 functions as the Nucleophile in the catalytic mechanism.

This sequence belongs to the succinylarginine dihydrolase family. As to quaternary structure, homodimer.

It catalyses the reaction N(2)-succinyl-L-arginine + 2 H2O + 2 H(+) = N(2)-succinyl-L-ornithine + 2 NH4(+) + CO2. Its pathway is amino-acid degradation; L-arginine degradation via AST pathway; L-glutamate and succinate from L-arginine: step 2/5. Its function is as follows. Catalyzes the hydrolysis of N(2)-succinylarginine into N(2)-succinylornithine, ammonia and CO(2). The polypeptide is N-succinylarginine dihydrolase (Escherichia coli (strain SE11)).